A 304-amino-acid chain; its full sequence is Movement protein (304 aa).

The segment at 257–304 is disordered; the sequence is ETNKLSDVESSSDSSSLLSMRARSRRYTKNYKIPIKRHPQATGEVGTT. Residues 264–277 are compositionally biased toward low complexity; it reads VESSSDSSSLLSMR. Residues 278-295 show a composition bias toward basic residues; it reads ARSRRYTKNYKIPIKRHP.

Cell-to-cell movement and long-distance transport of the viral infection. Also acts as a suppressor of RNA-mediated gene silencing, also known as post-transcriptional gene silencing (PTGS), a mechanism of plant viral defense that limits the accumulation of viral RNAs. This Carnation ringspot virus (isolate Lommel) (CRSV) protein is Movement protein.